A 255-amino-acid chain; its full sequence is DASH complex subunit SPC34 (255 aa).

The disordered stretch occupies residues L53 to Q81. Over residues Q63–Q81 the composition is skewed to polar residues. Residues L176–D248 are a coiled coil.

Belongs to the DASH complex SPC34 family. Component of the DASH complex consisting of ASK1, DAD1, DAD2, DAD3, DAD4, DAM1, DUO1, HSK3, SPC19 and SPC34, with a stoichiometry of one copy of each subunit per complex. Multiple DASH complexes oligomerize to form a ring that encircles spindle microtubules and organizes the rod-like NDC80 complexes of the outer kinetochore of the outer kinetochore. DASH complex oligomerization strengthens microtubule attachments. On cytoplasmic microtubules, DASH complexes appear to form patches instead of rings.

Its subcellular location is the nucleus. It localises to the cytoplasm. It is found in the cytoskeleton. The protein localises to the spindle. The protein resides in the chromosome. Its subcellular location is the centromere. It localises to the kinetochore. Functionally, component of the DASH complex that connects microtubules with kinetochores and couples microtubule depolymerisation to chromosome movement; it is involved in retrieving kinetochores to the spindle poles before their re-orientation on the spindle in early mitosis and allows microtubule depolymerization to pull chromosomes apart and resist detachment during anaphase. Kinetochores, consisting of a centromere-associated inner segment and a microtubule-contacting outer segment, play a crucial role in chromosome segregation by mediating the physical connection between centromeric DNA and microtubules. Kinetochores also serve as an input point for the spindle assembly checkpoint, which delays anaphase until all chromosomes have bioriented on the mitotic spindle. The polypeptide is DASH complex subunit SPC34 (Chaetomium thermophilum (strain DSM 1495 / CBS 144.50 / IMI 039719) (Thermochaetoides thermophila)).